A 104-amino-acid chain; its full sequence is ATP-dependent Clp protease adapter protein ClpS (104 aa).

Positions 1 to 20 (MSPDPHEDLGDVLTEPTQKT) are disordered.

Belongs to the ClpS family. As to quaternary structure, binds to the N-terminal domain of the chaperone ClpA.

Functionally, involved in the modulation of the specificity of the ClpAP-mediated ATP-dependent protein degradation. The protein is ATP-dependent Clp protease adapter protein ClpS of Desulfatibacillum aliphaticivorans.